The following is a 184-amino-acid chain: Large ribosomal subunit protein eL18 (184 aa).

The protein belongs to the eukaryotic ribosomal protein eL18 family.

It localises to the cytoplasm. The polypeptide is Large ribosomal subunit protein eL18 (RPL18) (Theileria parva (East coast fever infection agent)).